The sequence spans 526 residues: Putative NipSnap protein K02D10.1 (526 aa).

It belongs to the NipSnap family.

The chain is Putative NipSnap protein K02D10.1 from Caenorhabditis elegans.